A 163-amino-acid polypeptide reads, in one-letter code: Cyclic pyranopterin monophosphate synthase (163 aa).

Substrate contacts are provided by residues 74–76 (MCH) and 111–112 (ME). The active site involves aspartate 126.

This sequence belongs to the MoaC family. Homohexamer; trimer of dimers.

The enzyme catalyses (8S)-3',8-cyclo-7,8-dihydroguanosine 5'-triphosphate = cyclic pyranopterin phosphate + diphosphate. Its pathway is cofactor biosynthesis; molybdopterin biosynthesis. Catalyzes the conversion of (8S)-3',8-cyclo-7,8-dihydroguanosine 5'-triphosphate to cyclic pyranopterin monophosphate (cPMP). This chain is Cyclic pyranopterin monophosphate synthase, found in Desulfitobacterium hafniense (strain DSM 10664 / DCB-2).